The chain runs to 351 residues: Phosphoribosylformylglycinamidine cyclo-ligase (351 aa).

Belongs to the AIR synthase family.

It localises to the cytoplasm. The catalysed reaction is 2-formamido-N(1)-(5-O-phospho-beta-D-ribosyl)acetamidine + ATP = 5-amino-1-(5-phospho-beta-D-ribosyl)imidazole + ADP + phosphate + H(+). It functions in the pathway purine metabolism; IMP biosynthesis via de novo pathway; 5-amino-1-(5-phospho-D-ribosyl)imidazole from N(2)-formyl-N(1)-(5-phospho-D-ribosyl)glycinamide: step 2/2. This Burkholderia lata (strain ATCC 17760 / DSM 23089 / LMG 22485 / NCIMB 9086 / R18194 / 383) protein is Phosphoribosylformylglycinamidine cyclo-ligase.